Consider the following 217-residue polypeptide: Large ribosomal subunit protein uL3 (217 aa).

This sequence belongs to the universal ribosomal protein uL3 family. In terms of assembly, part of the 50S ribosomal subunit. Forms a cluster with proteins L14 and L19.

Its function is as follows. One of the primary rRNA binding proteins, it binds directly near the 3'-end of the 23S rRNA, where it nucleates assembly of the 50S subunit. The protein is Large ribosomal subunit protein uL3 of Mycolicibacterium smegmatis (strain ATCC 700084 / mc(2)155) (Mycobacterium smegmatis).